The following is a 346-amino-acid chain: Short-chain dehydrogenase/reductase bet4 (346 aa).

Residues 1–35 (MTPAKAPSHAKKPEAGSQPISSMWTQMFPPKPTYT) form a disordered region. Residues Val-56, Lys-80, Asp-105, and Asn-132 each coordinate NADP(+). The Proton donor role is filled by Ser-191. 2 residues coordinate NADP(+): Tyr-222 and Lys-226. The active-site Proton acceptor is Tyr-222. Catalysis depends on Lys-226, which acts as the Lowers pKa of active site Tyr.

This sequence belongs to the short-chain dehydrogenases/reductases (SDR) family.

The catalysed reaction is dehydroprobetaenone I + AH2 = probetaenone I + A. It participates in mycotoxin biosynthesis. In terms of biological role, short-chain dehydrogenase/reductase; part of the gene cluster that mediates the biosynthesis of betaenones, phytotoxic polyketides involved in leaf spot disease in sugar beets. The first step of the pathway is the synthesis of dehydroprobetaenone I by the polyketide synthase bet1 and the enoyl reductase bet3 via condensation of one acetyl-CoA starter unit with 7 malonyl-CoA units and 5 methylations. The C-terminal reductase (R) domain of bet1 catalyzes the reductive release of the polyketide chain. Because bet1 lacks a designated enoylreductase (ER) domain, the required activity is provided the enoyl reductase bet3. The short-chain dehydrogenase/reductase bet4 then catalyzes reduction of dehydroprobetaenone I to probetaenone I. The cytochrome P450 monooxygenase bet2 catalyzes successive epoxidation, oxidation (resulting from epoxide opening) and hydroxylation to install a tertiary alcohol in the decaline ring to yield betaenone C from dehydroprobetaenone I and betaenone B from probetaenone I. The FAD-linked oxidoreductase (orf1) is probably responsible for the conversion of betaenone C to betaenone A via an intramolecular aldol reaction between C-1 and C-17 to form the bridged tricyclic system in betaenone A. In Neocamarosporium betae (Beet black rot fungus), this protein is Short-chain dehydrogenase/reductase bet4.